Reading from the N-terminus, the 159-residue chain is ATP synthase subunit b 2 (159 aa).

The helical transmembrane segment at 1–21 threads the bilayer; the sequence is MDATFWAFIALVIFVVIVVYM.

This sequence belongs to the ATPase B chain family. As to quaternary structure, F-type ATPases have 2 components, F(1) - the catalytic core - and F(0) - the membrane proton channel. F(1) has five subunits: alpha(3), beta(3), gamma(1), delta(1), epsilon(1). F(0) has three main subunits: a(1), b(2) and c(10-14). The alpha and beta chains form an alternating ring which encloses part of the gamma chain. F(1) is attached to F(0) by a central stalk formed by the gamma and epsilon chains, while a peripheral stalk is formed by the delta and b chains.

Its subcellular location is the cell inner membrane. Its function is as follows. F(1)F(0) ATP synthase produces ATP from ADP in the presence of a proton or sodium gradient. F-type ATPases consist of two structural domains, F(1) containing the extramembraneous catalytic core and F(0) containing the membrane proton channel, linked together by a central stalk and a peripheral stalk. During catalysis, ATP synthesis in the catalytic domain of F(1) is coupled via a rotary mechanism of the central stalk subunits to proton translocation. Functionally, component of the F(0) channel, it forms part of the peripheral stalk, linking F(1) to F(0). The polypeptide is ATP synthase subunit b 2 (Brucella canis (strain ATCC 23365 / NCTC 10854 / RM-666)).